The primary structure comprises 69 residues: Alpha-conotoxin-like Tx1 (69 aa).

Residues 1 to 21 (MGMRMMFVVFLLVVLASTVVS) form the signal peptide. A propeptide spanning residues 22-49 (STSGRRAFHGRNAAAKASGLVSLTDRRP) is cleaved from the precursor. Disulfide bonds link cysteine 51/cysteine 57 and cysteine 52/cysteine 65. The interval 53 to 55 (SDP) is ser-Xaa-Pro motif, crucial for potent interaction with nAChR. Glycine 66 is modified (glycine amide).

It belongs to the conotoxin A superfamily. Expressed by the venom duct.

The protein localises to the secreted. Alpha-conotoxins act on postsynaptic membranes, they bind to the nicotinic acetylcholine receptors (nAChR) and thus inhibit them. The chain is Alpha-conotoxin-like Tx1 from Conus textile (Cloth-of-gold cone).